Consider the following 246-residue polypeptide: Mast cell protease 9 (246 aa).

Positions 1–18 (MQALLFLMALLLPSRAGA) are cleaved as a signal peptide. Residues 19–20 (EE) constitute a propeptide, activation peptide. The Peptidase S1 domain occupies 21-244 (IIGGVESEPH…HVPWINRVIK (224 aa)). C50 and C66 are disulfide-bonded. Active-site charge relay system residues include H65 and D109. 2 cysteine pairs are disulfide-bonded: C143-C208 and C174-C187. Residue S202 is the Charge relay system of the active site.

Belongs to the peptidase S1 family. Granzyme subfamily. As to expression, selectively expressed in uterine mast cells.

The sequence is that of Mast cell protease 9 (Mcpt9) from Mus musculus (Mouse).